The chain runs to 1872 residues: E3 ubiquitin-protein ligase UBR2 (1872 aa).

Residues 96 to 172 (TACTRLCFPS…DAFKCKNELN (77 aa)) form a UBR-type zinc finger. Lysine 709 participates in a covalent cross-link: Glycyl lysine isopeptide (Lys-Gly) (interchain with G-Cter in ubiquitin). The interval 1134–1240 (RYLMETAPHV…SSNTINSCCD (107 aa)) is interaction with UBC2. The interval 1203-1227 (NNSVDTSDISTPRTTSPSLSPTRIN) is disordered. Residues 1212 to 1225 (STPRTTSPSLSPTR) show a composition bias toward low complexity. Residues serine 1218 and serine 1222 each carry the phosphoserine modification. An RING-type; atypical zinc finger spans residues 1241–1362 (DDCVFCKMPK…GLIYCPVCNS (122 aa)).

The protein belongs to the E3 ubiquitin-protein ligase UBR1-like family. Interacts with MUB1, RPN4 and UBC2.

It localises to the cytoplasm. It carries out the reaction S-ubiquitinyl-[E2 ubiquitin-conjugating enzyme]-L-cysteine + [acceptor protein]-L-lysine = [E2 ubiquitin-conjugating enzyme]-L-cysteine + N(6)-ubiquitinyl-[acceptor protein]-L-lysine.. It functions in the pathway protein modification; protein ubiquitination. E3 ubiquitin-protein ligase which probably functions outside the N-end rule pathway, since it lacks the residues essential for the degradation of N-end rule substrates. Mediates RPN4 ubiquitination and subsequent degradation. This chain is E3 ubiquitin-protein ligase UBR2 (UBR2), found in Saccharomyces cerevisiae (strain ATCC 204508 / S288c) (Baker's yeast).